Reading from the N-terminus, the 740-residue chain is Platelet endothelial cell adhesion molecule (740 aa).

The signal sequence occupies residues 1-27 (MRLRWTQGGNMWLGVLLTLQLCSSLEG). Topologically, residues 28–602 (QENSFTINSI…VRVYLAPWKK (575 aa)) are extracellular. Ig-like C2-type domains follow at residues 35–126 (NSIH…YKVV), 145–223 (GGVV…DSVR), and 236–315 (PKFH…SKVS). Asn52 and Asn84 each carry an N-linked (GlcNAc...) asparagine glycan. Intrachain disulfides connect Cys57-Cys109, Cys152-Cys206, and Cys256-Cys304. N-linked (GlcNAc...) asparagine glycosylation is found at Asn284, Asn301, Asn320, Asn357, Asn372, Asn436, Asn456, and Asn552. Ig-like C2-type domains follow at residues 328–404 (PKLK…VQIA), 425–494 (GQTI…KVLR), and 500–592 (PVEE…NILA). Disulfide bonds link Cys347–Cys387, Cys432–Cys477, and Cys524–Cys573. The helical transmembrane segment at 603-621 (GLIAVVVIAVIIAVLLLGA) threads the bilayer. Over 622–740 (RFYFLKKSKA…SRTEGSLDGT (119 aa)) the chain is Cytoplasmic. Short sequence motifs (ITIM motif) lie at residues 690–695 (VEYTEV) and 713–718 (TVYSEI). Residues Tyr692 and Tyr715 each carry the phosphotyrosine; by FER modification. Residues 697–740 (VTSPEPHRGLGTKGTETVYSEIRKADPDLVENRYSRTEGSLDGT) form a disordered region. A membrane-bound segment which detaches upon phosphorylation region spans residues 711 to 731 (TETVYSEIRKADPDLVENRYS). The span at 717–732 (EIRKADPDLVENRYSR) shows a compositional bias: basic and acidic residues. The tract at residues 723–740 (PDLVENRYSRTEGSLDGT) is may play a role in cytoprotective signaling. Residues Ser731 and Ser736 each carry the phosphoserine modification.

Trans-homodimer (via Ig-like C2-type 1 and Ig-like C2-type 2 domains); trans-homodimerization is required for cell-cell interaction. Forms a complex with BDKRB2 and GNAQ. Interacts with BDKRB2 and GNAQ. Interacts with PTPN11; Tyr-715 is critical for PTPN11 recruitment. Interacts with FER. Interacts with CD177; the interaction is Ca(2+)-dependent; the interaction is direct. Post-translationally, phosphorylated on Ser and Tyr residues by src kinases after cellular activation. Upon activation, phosphorylated on Ser-731 which probably initiates the dissociation of the membrane-interaction segment (residues 711-731) from the cell membrane allowing the sequential phosphorylation of Tyr-715 and Tyr-692. Constitutively phosphorylated on Ser-736 in resting platelets. Phosphorylated on tyrosine residues by FER and FES in response to FCER1 activation. In endothelial cells Fyn mediates mechanical-force (stretch or pull) induced tyrosine phosphorylation. In terms of processing, palmitoylation by ZDHHC21 is necessary for cell surface expression in endothelial cells and enrichment in membrane rafts.

The protein resides in the cell membrane. It localises to the membrane raft. Its subcellular location is the cell junction. Cell adhesion molecule which is required for leukocyte transendothelial migration (TEM) under most inflammatory conditions. Tyr-692 plays a critical role in TEM and is required for efficient trafficking of PECAM1 to and from the lateral border recycling compartment (LBRC) and is also essential for the LBRC membrane to be targeted around migrating leukocytes. Trans-homophilic interaction may play a role in endothelial cell-cell adhesion via cell junctions. Heterophilic interaction with CD177 plays a role in transendothelial migration of neutrophils. Homophilic ligation of PECAM1 prevents macrophage-mediated phagocytosis of neighboring viable leukocytes by transmitting a detachment signal. Promotes macrophage-mediated phagocytosis of apoptotic leukocytes by tethering them to the phagocytic cells; PECAM1-mediated detachment signal appears to be disabled in apoptotic leukocytes. Modulates bradykinin receptor BDKRB2 activation. Regulates bradykinin- and hyperosmotic shock-induced ERK1/2 activation in endothelial cells. Induces susceptibility to atherosclerosis. This is Platelet endothelial cell adhesion molecule (PECAM1) from Sus scrofa (Pig).